The sequence spans 459 residues: Interleukin-1 receptor-associated kinase 4 (459 aa).

Position 1 is an N-acetylmethionine (Met-1). In terms of domain architecture, Death spans Arg-20–Ala-104. Lys-34 is subject to N6-acetyllysine. The disordered stretch occupies residues Arg-115–Ser-161. Positions Ser-186 to Leu-454 constitute a Protein kinase domain. ATP contacts are provided by residues Met-192–Val-200 and Lys-213. Asp-311 acts as the Proton acceptor in catalysis. ATP-binding positions include Lys-313 to Asn-316 and Asp-329. Thr-342 and Thr-345 each carry phosphothreonine. Phosphoserine is present on Ser-346.

It belongs to the protein kinase superfamily. TKL Ser/Thr protein kinase family. Pelle subfamily. As to quaternary structure, associates with MYD88 and IRAK2 to form a ternary complex called the Myddosome. Once phosphorylated, IRAK4 dissociates from the receptor complex and then associates with the TNF receptor-associated factor 6 (TRAF6), IRAK1, and PELI1; this intermediate complex is required for subsequent NF-kappa-B activation. Direct binding of SMAD6 to PELI1 prevents complex formation and hence negatively regulates IL1R-TLR signaling and eventually NF-kappa-B-mediated gene expression. Interacts with IL1RL1. Interacts (when phosphorylated) with IRAK1. May interact (when phosphorylated) with IRAK3. Mg(2+) is required as a cofactor. In terms of processing, phosphorylated.

It is found in the cytoplasm. The enzyme catalyses L-seryl-[protein] + ATP = O-phospho-L-seryl-[protein] + ADP + H(+). It catalyses the reaction L-threonyl-[protein] + ATP = O-phospho-L-threonyl-[protein] + ADP + H(+). Its function is as follows. Serine/threonine-protein kinase that plays a critical role in initiating innate immune response against foreign pathogens. Involved in Toll-like receptor (TLR) and IL-1R signaling pathways. Is rapidly recruited by MYD88 to the receptor-signaling complex upon TLR activation to form the Myddosome together with IRAK2. Phosphorylates initially IRAK1, thus stimulating the kinase activity and intensive autophosphorylation of IRAK1. Phosphorylates E3 ubiquitin ligases Pellino proteins (PELI1, PELI2 and PELI3) to promote pellino-mediated polyubiquitination of IRAK1. Then, the ubiquitin-binding domain of IKBKG/NEMO binds to polyubiquitinated IRAK1 bringing together the IRAK1-MAP3K7/TAK1-TRAF6 complex and the NEMO-IKKA-IKKB complex. In turn, MAP3K7/TAK1 activates IKKs (CHUK/IKKA and IKBKB/IKKB) leading to NF-kappa-B nuclear translocation and activation. Alternatively, phosphorylates TIRAP to promote its ubiquitination and subsequent degradation. Phosphorylates NCF1 and regulates NADPH oxidase activation after LPS stimulation suggesting a similar mechanism during microbial infections. The polypeptide is Interleukin-1 receptor-associated kinase 4 (Irak4) (Mus musculus (Mouse)).